The sequence spans 252 residues: Flap endonuclease Xni (252 aa).

Asp-105 contacts Mg(2+). In terms of domain architecture, 5'-3' exonuclease spans 161–251 (VESTQFIDYL…NVNLKQFRIE (91 aa)). The K(+) site is built by Leu-172, Ala-173, Pro-181, Val-183, and Ile-186. The interval 185–190 (GIGPKS) is interaction with DNA.

Belongs to the Xni family. Mg(2+) is required as a cofactor. The cofactor is K(+).

Functionally, has flap endonuclease activity. During DNA replication, flap endonucleases cleave the 5'-overhanging flap structure that is generated by displacement synthesis when DNA polymerase encounters the 5'-end of a downstream Okazaki fragment. The protein is Flap endonuclease Xni of Shewanella halifaxensis (strain HAW-EB4).